Consider the following 163-residue polypeptide: uncharacterized protein (163 aa).

Positions 142–163 are disordered; that stretch reads PQIVISEHNNTKETSPSRQFEH. Over residues 153 to 163 the composition is skewed to polar residues; sequence KETSPSRQFEH.

It belongs to the RCAN family.

Functionally, inhibits calcineurin-dependent transcriptional responses by binding to the catalytic domain of calcineurin. This is an uncharacterized protein from Schizosaccharomyces pombe (strain 972 / ATCC 24843) (Fission yeast).